The primary structure comprises 172 residues: Protein LOL2 (172 aa).

3 putative zinc finger regions span residues 4-34 (QIVC…VSST), 44-74 (HLIC…VNLV), and 82-112 (HLNC…ITNT).

It is found in the nucleus. Functionally, putative zinc finger that may be involved in programmed cell death and defense response. The chain is Protein LOL2 (LOL2) from Oryza sativa subsp. japonica (Rice).